Consider the following 274-residue polypeptide: NH(3)-dependent NAD(+) synthetase (274 aa).

An ATP-binding site is contributed by 46–53 (GISGGQDS). Residue D52 participates in Mg(2+) binding. R140 lines the deamido-NAD(+) pocket. T160 is an ATP binding site. Residue E165 coordinates Mg(2+). Residues K173 and D180 each contribute to the deamido-NAD(+) site. Positions 189 and 211 each coordinate ATP. 260 to 261 (HK) serves as a coordination point for deamido-NAD(+).

Belongs to the NAD synthetase family. As to quaternary structure, homodimer.

It catalyses the reaction deamido-NAD(+) + NH4(+) + ATP = AMP + diphosphate + NAD(+) + H(+). Its pathway is cofactor biosynthesis; NAD(+) biosynthesis; NAD(+) from deamido-NAD(+) (ammonia route): step 1/1. Functionally, catalyzes the ATP-dependent amidation of deamido-NAD to form NAD. Uses ammonia as a nitrogen source. The chain is NH(3)-dependent NAD(+) synthetase from Listeria welshimeri serovar 6b (strain ATCC 35897 / DSM 20650 / CCUG 15529 / CIP 8149 / NCTC 11857 / SLCC 5334 / V8).